Consider the following 888-residue polypeptide: Isoleucine--tRNA ligase (888 aa).

Positions 61 to 71 match the 'HIGH' region motif; that stretch reads PYANGSIHIGH. Residue Glu551 participates in L-isoleucyl-5'-AMP binding. A 'KMSKS' region motif is present at residues 592 to 596; the sequence is KMSKQ. ATP is bound at residue Lys595. 4 residues coordinate Zn(2+): Cys862, Cys865, Cys879, and Cys882.

This sequence belongs to the class-I aminoacyl-tRNA synthetase family. IleS type 1 subfamily. As to quaternary structure, monomer. Zn(2+) serves as cofactor.

It is found in the cytoplasm. The catalysed reaction is tRNA(Ile) + L-isoleucine + ATP = L-isoleucyl-tRNA(Ile) + AMP + diphosphate. In terms of biological role, catalyzes the attachment of isoleucine to tRNA(Ile). As IleRS can inadvertently accommodate and process structurally similar amino acids such as valine, to avoid such errors it has two additional distinct tRNA(Ile)-dependent editing activities. One activity is designated as 'pretransfer' editing and involves the hydrolysis of activated Val-AMP. The other activity is designated 'posttransfer' editing and involves deacylation of mischarged Val-tRNA(Ile). The sequence is that of Isoleucine--tRNA ligase from Mycoplasmopsis pulmonis (strain UAB CTIP) (Mycoplasma pulmonis).